Here is a 761-residue protein sequence, read N- to C-terminus: Protein ACTIVITY OF BC1 COMPLEX KINASE 8, chloroplastic (761 aa).

The N-terminal 57 residues, 1–57 (MATSSSSSSSLLLPNINFNSRQSPTITRSVSIAGIFLPRNRLSYNHNLRIRTRLIRA), are a transit peptide targeting the chloroplast. The region spanning 288–648 (RFDYEPIAAA…VKDLRKRWDR (361 aa)) is the Protein kinase domain. Residues 294-302 (IAAASLGQV) and lysine 315 each bind ATP. The active-site Proton acceptor is the aspartate 452. Residues 725–745 (PATIAYTVCAFFSLQVLIGII) form a helical membrane-spanning segment.

Belongs to the protein kinase superfamily. ADCK protein kinase family. As to expression, mostly expressed in leaves and flowers, and, to a lower extent, in stems, siliques and roots.

It is found in the plastid. Its subcellular location is the chloroplast envelope. It localises to the chloroplast membrane. The enzyme catalyses L-seryl-[protein] + ATP = O-phospho-L-seryl-[protein] + ADP + H(+). It carries out the reaction L-threonyl-[protein] + ATP = O-phospho-L-threonyl-[protein] + ADP + H(+). Its function is as follows. Involved in resistance to oxidative stress (e.g. hydrogen peroxide H(2)O(2)), high light and heavy metals (e.g. cadmium ions Cd(2+)). Influences responses to reactive oxygen species (ROS) production. Together with SIA1, regulates iron distribution within the chloroplast and mediates the oxidative stress response. Together with ABC1K7, influences chloroplast lipid synthesis/accumulation and modulates chloroplast membrane composition in response to stress. The chain is Protein ACTIVITY OF BC1 COMPLEX KINASE 8, chloroplastic from Arabidopsis thaliana (Mouse-ear cress).